The sequence spans 160 residues: Prostaglandin E synthase 3 (160 aa).

In terms of domain architecture, CS spans methionine 1–threonine 90. The residue at position 33 (lysine 33) is an N6-acetyllysine. Lysine 35 participates in a covalent cross-link: Glycyl lysine isopeptide (Lys-Gly) (interchain with G-Cter in SUMO2). At serine 44 the chain carries Phosphoserine. A Glycyl lysine isopeptide (Lys-Gly) (interchain with G-Cter in SUMO2) cross-link involves residue lysine 65. Serine 85, serine 100, serine 113, and serine 118 each carry phosphoserine. The tract at residues serine 118–glutamate 160 is disordered. A compositionally biased stretch (basic and acidic residues) spans arginine 122–glycine 132. Residues aspartate 133–aspartate 153 are compositionally biased toward acidic residues. Residues serine 148 and serine 151 each carry the phosphoserine modification. A PXLE motif motif is present at residues proline 157 to glutamate 160.

This sequence belongs to the p23/wos2 family. In terms of assembly, probably forms a complex composed of chaperones HSP90 and HSP70, co-chaperones STIP1/HOP, CDC37, PPP5C, PTGES3/p23, TSC1 and client protein TSC2. Binds to the progesterone receptor. Interacts with TERT; the interaction, together with HSP90AA1, is required for correct assembly and stabilization of the telomerase holoenzyme complex. Interacts (via PXLE motif) with EGLN1/PHD2, recruiting EGLN1/PHD2 to the HSP90 pathway to facilitate HIF alpha proteins hydroxylation. Interacts with HSP90AA1, FLCN, FNIP1 and FNIP2. Proteolytically cleaved by caspase-7 (CASP7) in response to apoptosis, leading to its inactivation. Expressed in testis, kidney, bladder and ovary.

The protein resides in the cytoplasm. The enzyme catalyses prostaglandin H2 = prostaglandin E2. The protein operates within lipid metabolism; prostaglandin biosynthesis. Functionally, cytosolic prostaglandin synthase that catalyzes the oxidoreduction of prostaglandin endoperoxide H2 (PGH2) to prostaglandin E2 (PGE2). Molecular chaperone that localizes to genomic response elements in a hormone-dependent manner and disrupts receptor-mediated transcriptional activation, by promoting disassembly of transcriptional regulatory complexes. Facilitates HIF alpha proteins hydroxylation via interaction with EGLN1/PHD2, leading to recruit EGLN1/PHD2 to the HSP90 pathway. This chain is Prostaglandin E synthase 3 (Ptges3), found in Mus musculus (Mouse).